A 305-amino-acid polypeptide reads, in one-letter code: Coenzyme PQQ synthesis protein B (305 aa).

Belongs to the PqqB family.

It functions in the pathway cofactor biosynthesis; pyrroloquinoline quinone biosynthesis. Functionally, may be involved in the transport of PQQ or its precursor to the periplasm. The chain is Coenzyme PQQ synthesis protein B from Methylobacillus flagellatus.